Consider the following 460-residue polypeptide: Argininosuccinate lyase (460 aa).

This sequence belongs to the lyase 1 family. Argininosuccinate lyase subfamily.

Its subcellular location is the cytoplasm. The catalysed reaction is 2-(N(omega)-L-arginino)succinate = fumarate + L-arginine. Its pathway is amino-acid biosynthesis; L-arginine biosynthesis; L-arginine from L-ornithine and carbamoyl phosphate: step 3/3. This Campylobacter hominis (strain ATCC BAA-381 / DSM 21671 / CCUG 45161 / LMG 19568 / NCTC 13146 / CH001A) protein is Argininosuccinate lyase.